The chain runs to 261 residues: 3-methyl-2-oxobutanoate hydroxymethyltransferase (261 aa).

Mg(2+)-binding residues include aspartate 42 and aspartate 81. Residues 42 to 43 (DS), aspartate 81, and lysine 110 each bind 3-methyl-2-oxobutanoate. Position 112 (glutamate 112) interacts with Mg(2+). Glutamate 179 (proton acceptor) is an active-site residue.

It belongs to the PanB family. As to quaternary structure, homodecamer; pentamer of dimers. Mg(2+) is required as a cofactor.

It localises to the cytoplasm. It catalyses the reaction 3-methyl-2-oxobutanoate + (6R)-5,10-methylene-5,6,7,8-tetrahydrofolate + H2O = 2-dehydropantoate + (6S)-5,6,7,8-tetrahydrofolate. The protein operates within cofactor biosynthesis; (R)-pantothenate biosynthesis; (R)-pantoate from 3-methyl-2-oxobutanoate: step 1/2. Its function is as follows. Catalyzes the reversible reaction in which hydroxymethyl group from 5,10-methylenetetrahydrofolate is transferred onto alpha-ketoisovalerate to form ketopantoate. In Thermus thermophilus (strain ATCC BAA-163 / DSM 7039 / HB27), this protein is 3-methyl-2-oxobutanoate hydroxymethyltransferase.